The primary structure comprises 246 residues: uncharacterized protein (246 aa).

The tract at residues 120–149 is disordered; sequence EKCAGETSPYTSASVSNSKKATSSSNFTKS. Residues 130 to 149 show a composition bias toward low complexity; it reads TSASVSNSKKATSSSNFTKS.

This is an uncharacterized protein from Caenorhabditis elegans.